We begin with the raw amino-acid sequence, 201 residues long: UPF0301 protein RHA1_ro03630 (201 aa).

This sequence belongs to the UPF0301 (AlgH) family.

This is UPF0301 protein RHA1_ro03630 from Rhodococcus jostii (strain RHA1).